The sequence spans 265 residues: Uronate dehydrogenase (265 aa).

NAD(+)-binding positions include 12–13 (QL), 32–34 (DLS), 49–50 (DL), and 69–73 (LGGIS). Residues S73 and 109–111 (SNH) contribute to the substrate site. Y134 (proton acceptor) is an active-site residue. K138 contributes to the NAD(+) binding site. S163 lines the substrate pocket. Residue C164 participates in NAD(+) binding. R172 contributes to the substrate binding site.

The protein belongs to the NAD(P)-dependent epimerase/dehydratase family. As to quaternary structure, homohexamer.

It carries out the reaction beta-D-galacturonate + NAD(+) = D-galactaro-1,5-lactone + NADH + H(+). It catalyses the reaction beta-D-glucuronate + NAD(+) = D-glucaro-1,5-lactone + NADH + H(+). It functions in the pathway carbohydrate acid metabolism; D-galacturonate degradation via prokaryotic oxidative pathway. Functionally, catalyzes the oxidation of D-galacturonate and D-glucuronate to galactarate and D-glucarate, respectively. In fact, in water solution the substrate D-galacturonate is predominantly in pyranosic form whose beta anomer is converted by the enzyme to D-galactaro-1,5-lactone; in solution, this reaction product rearranges to the more stable D-galactaro-1,4-lactone. Makes part of the oxidative degradation pathway of D-galacturonate, which allows A.tumefaciens to utilize D-galacturonate as a sole carbon source. Cannot use NADP(+) instead of NAD(+) as cosubstrate. Is not active on D-galactose, D-glucose, D-galactonate and D-gluconate. The protein is Uronate dehydrogenase (udh) of Agrobacterium fabrum (strain C58 / ATCC 33970) (Agrobacterium tumefaciens (strain C58)).